The following is a 260-amino-acid chain: 6-carboxyhexanoate--CoA ligase (260 aa).

This sequence belongs to the BioW family. In terms of assembly, homodimer. Mg(2+) is required as a cofactor.

It carries out the reaction heptanedioate + ATP + CoA = 6-carboxyhexanoyl-CoA + AMP + diphosphate. It participates in metabolic intermediate metabolism; pimeloyl-CoA biosynthesis; pimeloyl-CoA from pimelate: step 1/1. Catalyzes the transformation of pimelate into pimeloyl-CoA with concomitant hydrolysis of ATP to AMP. The polypeptide is 6-carboxyhexanoate--CoA ligase (Fibrobacter succinogenes (strain ATCC 19169 / S85)).